The sequence spans 366 residues: Class I histocompatibility antigen, Gogo-C*0203 alpha chain (366 aa).

The first 24 residues, Met1–Ala24, serve as a signal peptide directing secretion. The tract at residues Gly25 to Asp114 is alpha-1. Topologically, residues Gly25–Ile308 are extracellular. A glycan (N-linked (GlcNAc...) asparagine) is linked at Asn110. The segment at Gly115 to Ala206 is alpha-2. Intrachain disulfides connect Cys125–Cys188 and Cys227–Cys283. Residues Glu207–Trp298 form an alpha-3 region. Residues Pro209–Arg297 enclose the Ig-like C1-type domain. Positions Glu299–Ile308 are connecting peptide. A helical membrane pass occupies residues Val309–Met332. Topologically, residues Cys333 to Ala366 are cytoplasmic.

The protein belongs to the MHC class I family. Heterodimer of an alpha chain and a beta chain (beta-2-microglobulin).

The protein resides in the membrane. Functionally, involved in the presentation of foreign antigens to the immune system. This chain is Class I histocompatibility antigen, Gogo-C*0203 alpha chain, found in Gorilla gorilla gorilla (Western lowland gorilla).